The sequence spans 211 residues: Thiamine-phosphate synthase (211 aa).

4-amino-2-methyl-5-(diphosphooxymethyl)pyrimidine contacts are provided by residues 44–48 and asparagine 75; that span reads QYRNK. Mg(2+) is bound by residues aspartate 76 and aspartate 95. Serine 114 serves as a coordination point for 4-amino-2-methyl-5-(diphosphooxymethyl)pyrimidine. Residue 140–142 coordinates 2-[(2R,5Z)-2-carboxy-4-methylthiazol-5(2H)-ylidene]ethyl phosphate; it reads TKS. Residue lysine 143 participates in 4-amino-2-methyl-5-(diphosphooxymethyl)pyrimidine binding. Residue glycine 171 participates in 2-[(2R,5Z)-2-carboxy-4-methylthiazol-5(2H)-ylidene]ethyl phosphate binding.

The protein belongs to the thiamine-phosphate synthase family. The cofactor is Mg(2+).

It carries out the reaction 2-[(2R,5Z)-2-carboxy-4-methylthiazol-5(2H)-ylidene]ethyl phosphate + 4-amino-2-methyl-5-(diphosphooxymethyl)pyrimidine + 2 H(+) = thiamine phosphate + CO2 + diphosphate. The enzyme catalyses 2-(2-carboxy-4-methylthiazol-5-yl)ethyl phosphate + 4-amino-2-methyl-5-(diphosphooxymethyl)pyrimidine + 2 H(+) = thiamine phosphate + CO2 + diphosphate. It catalyses the reaction 4-methyl-5-(2-phosphooxyethyl)-thiazole + 4-amino-2-methyl-5-(diphosphooxymethyl)pyrimidine + H(+) = thiamine phosphate + diphosphate. It participates in cofactor biosynthesis; thiamine diphosphate biosynthesis; thiamine phosphate from 4-amino-2-methyl-5-diphosphomethylpyrimidine and 4-methyl-5-(2-phosphoethyl)-thiazole: step 1/1. Its function is as follows. Condenses 4-methyl-5-(beta-hydroxyethyl)thiazole monophosphate (THZ-P) and 2-methyl-4-amino-5-hydroxymethyl pyrimidine pyrophosphate (HMP-PP) to form thiamine monophosphate (TMP). The sequence is that of Thiamine-phosphate synthase from Koribacter versatilis (strain Ellin345).